Here is a 512-residue protein sequence, read N- to C-terminus: Pantetheinase (512 aa).

The first 23 residues, 1–23 (MGMSWWLACAAAFSALCVLKASS), serve as a signal peptide directing secretion. A CN hydrolase domain is found at 32–308 (YEHAVILPKD…GKLLFAQLKS (277 aa)). The active-site Proton acceptor is the Glu-81. 2 N-linked (GlcNAc...) asparagine glycosylation sites follow: Asn-132 and Asn-148. The Proton donor role is filled by Lys-180. Catalysis depends on Cys-213, which acts as the Nucleophile. Asn-316 and Asn-354 each carry an N-linked (GlcNAc...) asparagine glycan. The GPI-anchor amidated asparagine moiety is linked to residue Asn-488. The propeptide at 489–512 (ASSDFIAHSLIIMLIVTPIIHYLC) is removed in mature form.

This sequence belongs to the carbon-nitrogen hydrolase superfamily. BTD/VNN family. In terms of assembly, monomer. N-glycosylated. As to expression, detected in kidney (at protein level). Ubiquitous.

The protein resides in the cell membrane. The enzyme catalyses (R)-pantetheine + H2O = cysteamine + (R)-pantothenate. Its function is as follows. Amidohydrolase that hydrolyzes specifically one of the carboamide linkages in D-pantetheine thus recycling pantothenic acid (vitamin B5) and releasing cysteamine. This Mus musculus (Mouse) protein is Pantetheinase (Vnn1).